The primary structure comprises 272 residues: NADH-dependent L-xylulose reductase (272 aa).

Residues Leu24 and Asp78 each coordinate NADP(+). Residue Ser160 is the Proton donor of the active site. Residues Tyr175, Lys179, and Ile208 each contribute to the NADP(+) site. The active-site Proton acceptor is the Tyr175. The active-site Lowers pKa of active site Tyr is Lys179.

It belongs to the short-chain dehydrogenases/reductases (SDR) family.

It catalyses the reaction xylitol + NAD(+) = L-xylulose + NADH + H(+). The enzyme catalyses D-arabinitol + NAD(+) = D-ribulose + NADH + H(+). Functionally, NADH-dependent L-xylulose reductase; part of the yeast pathway for L-arabinose catabolism. Reversibly converts L-xylulose to xylitol and D-ribulose to D-arabinitol. It has a much lower activity with D-xylulose. Sugar alcohols can serve as a substrate when the hydroxyl group of C-2 is in the L- and the hydroxyl group of the C-3 is in the D-configuration. Also seems to be specific for sugar alcohols that have not more than 5 carbons since no activity is observed with dulcitol (galactitol), which has the hydroxyl group of C-2 in L- and of C-3 in D-configuration, but is a six-carbon sugar alcohol. The sequence is that of NADH-dependent L-xylulose reductase from Ambrosiozyma monospora (Yeast).